Consider the following 276-residue polypeptide: RRP15-like protein (276 aa).

Disordered regions lie at residues 1–132 (MALL…QLRV) and 201–276 (KRAK…DGEE). 2 stretches are compositionally biased toward basic and acidic residues: residues 75–95 (FQKD…KADV) and 226–245 (KGSS…DFMT). Positions 254–276 (EEDDDEEGHNDEADDSDYDDGEE) are enriched in acidic residues. Ser269 is modified (phosphoserine). At Tyr271 the chain carries Phosphotyrosine.

Belongs to the RRP15 family.

This chain is RRP15-like protein, found in Drosophila melanogaster (Fruit fly).